A 309-amino-acid polypeptide reads, in one-letter code: Ferrochelatase (309 aa).

Fe cation-binding residues include histidine 185 and glutamate 264.

It belongs to the ferrochelatase family.

It is found in the cytoplasm. It carries out the reaction heme b + 2 H(+) = protoporphyrin IX + Fe(2+). It functions in the pathway porphyrin-containing compound metabolism; protoheme biosynthesis; protoheme from protoporphyrin-IX: step 1/1. In terms of biological role, catalyzes the ferrous insertion into protoporphyrin IX. The sequence is that of Ferrochelatase from Aquifex aeolicus (strain VF5).